Consider the following 274-residue polypeptide: tRNA-cytidine(32) 2-sulfurtransferase (274 aa).

The PP-loop motif motif lies at 40 to 45 (SGGKDS). Residues C115, C118, and C206 each coordinate [4Fe-4S] cluster.

Belongs to the TtcA family. Homodimer. Requires Mg(2+) as cofactor. The cofactor is [4Fe-4S] cluster.

The protein localises to the cytoplasm. The catalysed reaction is cytidine(32) in tRNA + S-sulfanyl-L-cysteinyl-[cysteine desulfurase] + AH2 + ATP = 2-thiocytidine(32) in tRNA + L-cysteinyl-[cysteine desulfurase] + A + AMP + diphosphate + H(+). It participates in tRNA modification. Functionally, catalyzes the ATP-dependent 2-thiolation of cytidine in position 32 of tRNA, to form 2-thiocytidine (s(2)C32). The sulfur atoms are provided by the cysteine/cysteine desulfurase (IscS) system. This Pseudomonas syringae pv. syringae (strain B728a) protein is tRNA-cytidine(32) 2-sulfurtransferase.